The chain runs to 854 residues: MTTTHVLSLPFRKSTQLSLSRAIQQYISAKYDQHPDMFRHDLDTIDALRRDAINVREAHPSGIRKLQMYAAQLVWIGGKFPIDVGADFTWYPALGYHTEHPLVQNNLKYELMNVLYNLAALYSQLAVASNRNSTEGLKTAASWFSHSAGVLTHIKTQVLPELRMPSPPDDMDETTLESLIQLFLAEAQECYWQKAVMDGYKDASIAKLAARVSDLYNEAGEAAMRSEAISSAWIHHMSAKHHHFAAAAQFRAASDCLERKKYGEEIARLRDAVACVNEGLKETRGGYLSKAVVEDLQGLKRRLEEDLKRAEIDNDRVYLHIVPPKTELKRLDRANMAVARVPPQVAKPYEFLGDPSAEFGPALFTKLVPFAVHVAVSIYEERRDRLVNNSIISELESMTSQLHEILSSLNLPGSLQALEKPLGLPGTLVQHADEIRQADALYRLQQGLTDIDKLCSSDLAIFEEGRSLLLAEEEEDSRLRLKYGTERWNRPQSRQDPSPNGGTKLWRQAQDIEGYFGSSTASDQVVREKFNAVRDTLTILAGSDRSIMDFIPNSRRTDIPESLKPALGRLRSAYNDVQRLESRRRKRVESLRARSRADDIKPDILVEAARLERAYPTTAIATAHFEDFFEKRLDRLYESELEAVERDKQEQEKIVQEVKRANKEFEAQKRQVDRAGGGNREREEALQKLDAAYYKYKEIVSNVEVGRKFYNDLSQIVEQWRGLVRGWVSERRRDARSLEEEINMPPLSSLNMHQSSFSYQQQQHHQQPPPPPPQIPFPEPIQPHQPIVEQAHIQSWADNVPQQQPKPVAPGAWAPNMGIKFGSPVAQGQQHQQEQGQPGPVNATWDPSQGIRFG.

The BRO1 domain occupies 5–402 (HVLSLPFRKS…SELESMTSQL (398 aa)). Residues 632 to 699 (RLDRLYESEL…DAAYYKYKEI (68 aa)) are a coiled coil. Disordered regions lie at residues 739–782 (EEEI…EPIQ) and 801–854 (PQQQ…IRFG). Positions 746-759 (PLSSLNMHQSSFSY) are enriched in polar residues. Over residues 767 to 782 (QPPPPPPQIPFPEPIQ) the composition is skewed to pro residues. The span at 827–839 (QGQQHQQEQGQPG) shows a compositional bias: low complexity.

This sequence belongs to the palA/RIM20 family. As to quaternary structure, interacts with pacc-1 by binding to its two YPX[LI] motifs.

In terms of biological role, required for the proteolytic cleavage of the transcription factor pacc-1 in response to alkaline ambient pH. May act as a scaffold protein that recruits the calpain-like protease palB/cpr-8 via snf7/vps-3 to its substrate pacc-1. This chain is pH-response regulator protein palA/prr-1 (prr-1), found in Neurospora crassa (strain ATCC 24698 / 74-OR23-1A / CBS 708.71 / DSM 1257 / FGSC 987).